The primary structure comprises 127 residues: uncharacterized protein (127 aa).

The disordered stretch occupies residues 1-34 (MKNPESSGVSSSPQIQRVSPSSSSTSPSPPSIGT). Residues 9–34 (VSSSPQIQRVSPSSSSTSPSPPSIGT) are compositionally biased toward low complexity. The next 2 membrane-spanning stretches (helical) occupy residues 47 to 67 (IAAV…PLAM) and 84 to 104 (TIAV…YLLV).

It is found in the membrane. This is an uncharacterized protein from Saccharomyces cerevisiae (strain ATCC 204508 / S288c) (Baker's yeast).